Here is a 619-residue protein sequence, read N- to C-terminus: E3 ubiquitin-protein ligase DTX4 (619 aa).

WWE domains follow at residues 1-78 and 79-155; these read MLLA…PVRR and NYYD…RVRR. 2 disordered regions span residues 238 to 281 and 358 to 389; these read KPLD…PGPN and PPPVSKSEIKSIPGVSNTSRKTTKKQAKKGKT. Over residues 261–273 the composition is skewed to polar residues; sequence QASSMPTGTTMGS. Positions 378 to 387 are enriched in basic residues; the sequence is KTTKKQAKKG. The RING-type; atypical zinc-finger motif lies at 409-468; that stretch reads CTICMERLTAPSGYKGPQPTVKPDLVGKLSRCGHVYHIYCLVAMYNNGNKDGSLQCPTCK.

The protein belongs to the Deltex family. Interacts with NLRP4.

The protein resides in the cytoplasm. The enzyme catalyses S-ubiquitinyl-[E2 ubiquitin-conjugating enzyme]-L-cysteine + [acceptor protein]-L-lysine = [E2 ubiquitin-conjugating enzyme]-L-cysteine + N(6)-ubiquitinyl-[acceptor protein]-L-lysine.. The protein operates within protein modification; protein ubiquitination. Its function is as follows. Regulator of Notch signaling, a signaling pathway involved in cell-cell communications that regulates a broad spectrum of cell-fate determinations. Functions as a ubiquitin ligase protein in vivo, mediating 'Lys48'-linked polyubiquitination and promoting degradation of TBK1, targeting to TBK1 requires interaction with NLRP4. In Homo sapiens (Human), this protein is E3 ubiquitin-protein ligase DTX4 (DTX4).